Consider the following 147-residue polypeptide: Nucleoside diphosphate kinase (147 aa).

ATP is bound by residues Lys-11, Phe-59, Arg-87, Thr-93, Arg-104, and Asn-114. The active-site Pros-phosphohistidine intermediate is the His-117.

Belongs to the NDK family. Homotetramer. Mg(2+) is required as a cofactor.

The protein resides in the cytoplasm. It catalyses the reaction a 2'-deoxyribonucleoside 5'-diphosphate + ATP = a 2'-deoxyribonucleoside 5'-triphosphate + ADP. The catalysed reaction is a ribonucleoside 5'-diphosphate + ATP = a ribonucleoside 5'-triphosphate + ADP. Its function is as follows. Major role in the synthesis of nucleoside triphosphates other than ATP. The ATP gamma phosphate is transferred to the NDP beta phosphate via a ping-pong mechanism, using a phosphorylated active-site intermediate. This is Nucleoside diphosphate kinase from Anaeromyxobacter dehalogenans (strain 2CP-1 / ATCC BAA-258).